We begin with the raw amino-acid sequence, 451 residues long: uncharacterized protein (451 aa).

A run of 11 helical transmembrane segments spans residues 13–33, 41–61, 97–117, 142–162, 174–194, 217–237, 255–275, 299–319, 345–365, 381–401, and 429–449; these read IGFVMAAAGSAIGLGAIWKFP, GGAFFLIFVLFTILLGYPLLV, ACFLVLSFYSVIGGWILLYIV, NPVQTLAAQLVFMALTVLVVA, AVMMPILFLLFILLVLRSLTL, ILFALGQAFFTLTLGVSVMVT, IVLMNIIVTLLAGLAIFPAVF, LPFGTLFFIGFLVAFLFAALT, WTSGLLIFLVGIPCCLSYGVL, FTVSNVLMPSGALLISLFIPL, and LLRFIVPLAIIIVFLNLIGIL.

Belongs to the sodium:neurotransmitter symporter (SNF) (TC 2.A.22) family.

It is found in the cell membrane. Functionally, putative sodium-dependent transporter. This is an uncharacterized protein from Bacillus subtilis (strain 168).